The primary structure comprises 5376 residues: Zonadhesin (5376 aa).

The first 17 residues, 1–17 (MALPVWTLMLLVGAAWG), serve as a signal peptide directing secretion. At 18 to 5310 (QEQVPAWRPN…TTRKKIEASS (5293 aa)) the chain is on the extracellular side. 3 consecutive MAM domains span residues 45–210 (SKCD…TCNQ), 215–374 (QMCT…PCGE), and 377–542 (PQCD…PCRV). Residues N339 and N499 are each glycosylated (N-linked (GlcNAc...) asparagine). The segment at 547 to 1170 (EIPSSPLLPP…PTTGVSTTES (624 aa)) is 80 X heptapeptide repeats (approximate) (mucin-like domain). 2 disordered regions span residues 553 to 579 (LLPPTGPSESTVPTLPMEQPTSPTKAT) and 1037 to 1113 (TVPP…TVST). The segment covering 1052 to 1113 (TEVTTTPPEE…IASEETTVST (62 aa)) has biased composition (low complexity). One can recognise a TIL 1 domain in the interval 1171–1220 (CPPNAHIELCACPASCESPKPSCQPPCIPGCVCNPGFLFSNNQCINESSC). 3 N-linked (GlcNAc...) asparagine glycosylation sites follow: N1216, N1239, and N1314. Positions 1227-1275 (KHYKPGEEWFTPNCTERCRCLPGSLMECQISQCGTHTVCQLKSDQYQCE) constitute a VWFC 1 domain. The VWFD 1 domain occupies 1280–1462 (ATCLVYGDLH…DKDWVSSRCQ (183 aa)). Intrachain disulfides connect C1282/C1417 and C1304/C1461. Positions 1555-1608 (CPKNSRYSLCAKPCPETCHPISTTQHCSDKCVEGCECDPGFILSGSECVPSSQC) constitute a TIL 2 domain. The VWFC 2 domain occupies 1609-1664 (GCTSFQGRYFKLQEQWFNPDCKEICTCESHNHILCKPWKCKAQEACSYKNGVLGCH). Residues 1669-1849 (ATCMVSGDPH…ILEASDPGCF (181 aa)) form the VWFD 2 domain. 2 cysteine pairs are disulfide-bonded: C1671-C1809 and C1693-C1848. N1814, N1908, and N1933 each carry an N-linked (GlcNAc...) asparagine glycan. One can recognise a TIL 3 domain in the interval 1941-1995 (CPPRSSYNPCANSCPATCLTLSTPRDCPTLPCVEGCECQSGHILSGTTCVPLRQC). A VWFC 3 domain is found at 1996–2052 (GCSDQDGSYHLLGESWYTEKTCTTLCTCSAHSNITCSPTACKANHVCLRQEGLLRCA). Residues N2028, N2111, N2142, and N2332 are each glycosylated (N-linked (GlcNAc...) asparagine). A VWFD 3 domain is found at 2056–2239 (GECRISEDSQ…KDKSMDPNCQ (184 aa)). Disulfide bonds link C2058-C2200 and C2080-C2238. Residues 2340 to 2398 (CPAHSHYTNCLPSCPPSCLDPDSRCEGSGHKVPATCREGCICQPDYVLLNDKCVLRSHC) enclose the TIL 4 domain. Positions 2399 to 2454 (GCKDAQGVFIPAGKTWISEDCTQSCTCMKGSMRCWDFQCPPGTYCKNSNDGSSNCV) constitute a VWFC 4 domain. Residues 2460 to 2518 (CPAHSKFTDCLPPCHPSCSDPDGHCEGISTNAHSNCKEGCVCQPGYVLRNDKCVLRIEC) form the TIL 5 domain. One can recognise a VWFC 5 domain in the interval 2519–2574 (GCQHTQGGFIPAGKNWTSRGCSQSCDCMEGVIRCQNFQCPSGTYCQDIEDGTSNCA). N-linked (GlcNAc...) asparagine glycosylation is found at N2533 and N2575. A TIL 6 domain is found at 2580-2638 (CPAHSSFTNCLPPCQPSCSDPEGHCGGSTTKAPSACQEGCVCEPDYVVLNNKCVPRIEC). Positions 2639–2694 (GCKDAQGVLIPADKIWINKGCTQTCACVTGTIHCRDFQCPSGTYCKDIKDDASNCT) constitute a VWFC 6 domain. N-linked (GlcNAc...) asparagine glycosylation occurs at N2692. One can recognise a TIL 7 domain in the interval 2700-2758 (CPDHSLYTHCLPSCLLSCSDPDGLCRGTSPEAPSTCKEGCVCDPDYVLSNDKCVLRIEC). A VWFC 7 domain is found at 2759-2814 (GCKDAQGVLIPAGKTWINRGCTQSCSCMGGAIQCQNFKCPSEAYCQDMEDGNSNCT). N2812 is a glycosylation site (N-linked (GlcNAc...) asparagine). A TIL 8 domain is found at 2820-2878 (CPAHSHYTNCLPTCQPSCSDPDGHCEGSSTKAPSACKEGCVCEPDYVMLNNKCVPRIEC). The VWFC 8 domain occupies 2879-2934 (GCKDTQGVLIPADKTWINRGCTQSCTCRGGAIQCQKYHCSSGTYCKDMEDDSSSCA). The TIL 9 domain maps to 2940–2998 (CPAHSHFTNCLPPCQPSCLDSEGHCEGSTTKAPSACQEGCVCEPDYVVLNNKCVPRIEC). Residues 2999–3054 (GCKDAQGVLIPADKTWINRGCTQSCTCKGGAIQCQKFQCPSETYCKDIEDGNSNCT) enclose the VWFC 9 domain. N3052, N3065, N3144, and N3172 each carry an N-linked (GlcNAc...) asparagine glycan. The region spanning 3060 to 3118 (CPANSNFTSCLPSCQPSCSNTDVHCEGSSPNTLSSCREGCVCQSGYVLHNDKCILRNQC) is the TIL 10 domain. Residues 3119 to 3174 (GCKDAQGALIPEGKTWITSGCTQSCNCTGGAIQCQNFQCPLKTYCKDLKDGSSNCT) form the VWFC 10 domain. One can recognise a TIL 11 domain in the interval 3180–3238 (CPAHSRYTNCLPSCPPLCLDPEGLCEGTSPKVPSTCREGCICQPGYLMHKNKCVLRIFC). Residues 3239 to 3294 (GCKNTQGAFISADKTWISRGCTQSCTCPAGAIHCRNFKCPSGTYCKNGDNGSSNCT) enclose the VWFC 11 domain. N-linked (GlcNAc...) asparagine glycosylation is found at N3288 and N3292. The TIL 12 domain maps to 3300-3355 (CPTNSQFTDCLPSCVPSCSNRCEVTSPSVPSSCREGCLCNHGFVFSEDKCVPRTQC). In terms of domain architecture, VWFC 12 spans 3356–3411 (GCKDARGAIIPAGKTWTSKGCTQSCACVEGNIQCQNFQCPPETYCKDNSEGSSTCT). Residues 3417-3475 (CPAHTQYTSCLPSCLPSCLDPEGLCKDISPKVPSTCKEGCVCQSGYVLNSDKCVLRAEC) form the TIL 13 domain. The region spanning 3476 to 3531 (DCKDAQGALIPAGKTWTSPGCTQSCACMGGAVQCQSSQCPPGTYCKDNEDGNSNCA) is the VWFC 13 domain. The TIL 14 domain maps to 3537–3595 (CPAHSLFTNCLPPCLPSCLDPDGLCKGASPKVPSTCKEGCICQSGYVLSNNKCLLRNRC). Residues 3596 to 3651 (GCKDAHGALIPEDKTWVSRGCTQSCVCTGGSIQCLSSQCPPGAYCKDNEDGSSNCA) form the VWFC 14 domain. One can recognise a TIL 15 domain in the interval 3657-3715 (CPANSHYTDCFPPCPPSCSDPEGHCEASGPRVLSTCREGCLCNPGFVLDRDKCVPRVEC). The VWFC 15 domain occupies 3716–3771 (GCKDAQGALIPSGKTWTSPGCTQSCACMGGVVQCQSSQCPPGTYCKDNEDGNSNCA). The TIL 16 domain occupies 3777-3835 (CPTHSNYTDCLPFCLPSCLDPSALCGGTSPKGPSTCKEGCVCQPGYVLDKDKCILKIEC). N-linked (GlcNAc...) asparagine glycosylation is present at N3782. The VWFC 16 domain occupies 3836-3891 (GCRDTQGAVIPAGKTWLSTGCIQSCACVEGTIQCQNFQCPPGTYCNHNNNCAKIPL). Positions 3893-3951 (CPAHSHFTSCLPSCPPSCANLDGSCEQTSPKVPSTCKEGCLCQPGYFLNNGKCVLQTHC) constitute a TIL 17 domain. Positions 3952–4007 (DCKDAEGGLVPAGKTWTSKDCTQSCACTGGAVQCQNFQCPLGTYCKDSGDGSSNCT) constitute a VWFC 17 domain. N4005 carries an N-linked (GlcNAc...) asparagine glycan. In terms of domain architecture, TIL 18 spans 4029-4087 (CPAHSHFTSCLPSCPPSCSNLDGSCVESNFKAPSVCKKGCICQPGYLLNNDKCVLRIQC). Positions 4088-4143 (GCKDTQGGLIPAGRTWISSDCTKSCSCMGGIIQCRDFQCPPGTYCKESNDSSRTCA) constitute a VWFC 18 domain. N4136 carries an N-linked (GlcNAc...) asparagine glycan. The TIL 19 domain maps to 4149-4207 (CPAHSHYTNCLPACSRSCTDLDGHCEGTSPKVPSPCKEGCLCQPGYVVHNHKCVLQIHC). The region spanning 4208-4262 (GCKDAQGGFVPAGKTWISRGCTQSCACVGGAVQCHNFTCPTGTQCQNSSCSKITV) is the VWFC 19 domain. 2 N-linked (GlcNAc...) asparagine glycosylation sites follow: N4243 and N4254. Residues 4264 to 4322 (CPAHSQYTTCLPSCLPSCFDPEGLCGGASPRAPSTCREGCVCEADYVLREDKCVLRTQC) enclose the TIL 20 domain. Positions 4323–4378 (GCKDAQGDLIPANKTWLTRGCAQKCTCKGGNIHCWNFKCPLGTECKDSVDGGSNCT) constitute a VWFC 20 domain. 2 N-linked (GlcNAc...) asparagine glycosylation sites follow: N4335 and N4376. The TIL 21 domain occupies 4384–4442 (CPAHSHHTYCLPSCIPSCSNVNDRCESTSLQRPSTCIEGCLCHSGFVFSKDKCVPRTQC). The 56-residue stretch at 4443–4498 (GCKDSQGTLIPAGKNWITTGCSQRCTCTGGLVQCHDFQCPSGAECQDIEDGNSNCV) folds into the VWFC 21 domain. A TIL 22 domain is found at 4504 to 4562 (CPAHSHYSKCLPPCQPSCSDPDGHCEGTSPEAPSTCEEGCVCEPDYVLSNDKCVPSSEC). A VWFC 22 domain is found at 4563 to 4618 (GCKDAHGVLIPESKTWVSRGCTKNCTCKGGTVQCHDFSCPTGSRCLDNNEGNSNCV). N4586 carries an N-linked (GlcNAc...) asparagine glycan. The TIL 23 domain occupies 4624–4682 (CPAHSLYTNCLPSCLPSCSDPEGLCGGTSPEVPSTCKEGCICQSGYVLHKNKCMLRIHC). In terms of domain architecture, VWFC 23 spans 4683 to 4738 (DCKDFQGSLIKTGQTWISSGCSKICTCKGGFFQCQSYKCPSGTQCEESEDGSSNCV). Residues 4744–4802 (CPANSLYTHCLPTCLPSCSNPDGRCEGTSHKAPSTCREGCVCQPGYLLNKDTCVHKNQC) form the TIL 24 domain. Residues 4803–4858 (GCKDIRGNIIPAGNTWISSDCTQSCACTDGVIQCQNFVCPSGSHCQYNEDGSSDCA) form the VWFC 24 domain. In terms of domain architecture, VWFD 4 spans 4863–5038 (ERCTIFGDPY…SWEVKAQHAF (176 aa)). A disulfide bridge connects residues C4865 and C5001. N5136 carries an N-linked (GlcNAc...) asparagine glycan. The TIL 25 domain occupies 5150–5203 (CPANTVYQRCMTPCPASCAKFVTPKVCEGPCVEGCASLPGYIYSDTQSLPVTHC). Residues 5204–5258 (GCTADGIYYKLGDSFVTNDCSQHCTCASQGILLCEPYGCRAGESCMVANFTRGCF) enclose the VWFC 25 domain. N5252 is a glycosylation site (N-linked (GlcNAc...) asparagine). Residues 5259–5295 (QDSPCLQNPCHNDGRCEEQGATFICHCDFGYGGEFCT) form the EGF-like domain. 3 disulfides stabilise this stretch: C5263-C5274, C5268-C5283, and C5285-C5294. Residues 5311-5337 (LVAILPGVLVMVLVPVLLPRVYVYMAT) form a helical membrane-spanning segment. Over 5338–5376 (RTTMGRRRMKRKEKKLLRQSRLRLEDADVPEPTFKATEF) the chain is Cytoplasmic.

In terms of assembly, probably forms covalent oligomers. In testis, primarily in haploid spermatids.

Its subcellular location is the cell membrane. Functionally, binds in a species-specific manner to the zona pellucida of the egg. May be involved in gamete recognition and/or signaling. This chain is Zonadhesin (Zan), found in Mus musculus (Mouse).